A 975-amino-acid polypeptide reads, in one-letter code: Ubiquitin C-terminal hydrolase 15 (975 aa).

Cys-88, Cys-91, Cys-99, Cys-102, Cys-108, Cys-112, His-121, and Cys-125 together coordinate Zn(2+). The MYND-type zinc finger occupies 88-125 (CATCHGPAKTRCSRCKSVRYCSGKCQIIHWRQGHKQTC). The disordered stretch occupies residues 301 to 378 (EGPYASAAES…STKTAVSTNS (78 aa)). The segment covering 309 to 322 (ESLQRSNSSGNVTG) has biased composition (polar residues). Residues 354–369 (YDGHEKNPHNKNEQRS) are compositionally biased toward basic and acidic residues. Residues 441–747 (RGLFNCGNSC…GAYMLFYMRS (307 aa)) enclose the USP domain. Catalysis depends on Cys-450, which acts as the Nucleophile. The active-site Proton acceptor is His-706. The interval 764–783 (PTCSKRHSSKSSKGSKQDLN) is disordered.

It belongs to the peptidase C19 family. Highly expressed in young panicles. Expressed in roots, leaf blades, leaf sheaths and stems. Expressed at low levels in brown grains.

The protein localises to the cytoplasm. It localises to the nucleus. It catalyses the reaction Thiol-dependent hydrolysis of ester, thioester, amide, peptide and isopeptide bonds formed by the C-terminal Gly of ubiquitin (a 76-residue protein attached to proteins as an intracellular targeting signal).. Recognizes and hydrolyzes the peptide bond at the C-terminal Gly of ubiquitin. Involved in the processing of poly-ubiquitin precursors as well as that of ubiquitinated proteins. Involved in the regulation of grain size. Acts as positive regulator of grain width and size by influencing cell proliferation. Functions partially antagonistically with GW2 in the regulation of grain width. Possesses deubiquitinating enzyme activity in vitro. This chain is Ubiquitin C-terminal hydrolase 15, found in Oryza sativa subsp. japonica (Rice).